We begin with the raw amino-acid sequence, 571 residues long: Gag-Pro polyprotein (571 aa).

Residue Gly-2 is the site of N-myristoyl glycine; by host attachment. The PPXY motif signature appears at 100–103; sequence PPPY. Repeats lie at residues 342–362 and 367–387; these read PPGPCYRCLKEGHWARDCPTK and PPGPCPICKDPSHWKRDCPTL. 2 consecutive CCHC-type zinc fingers follow at residues 345 to 362 and 370 to 387; these read PCYRCLKEGHWARDCPTK and PCPICKDPSHWKRDCPTL. Thr-453 (protease; shared with dimeric partner) is an active-site residue.

In terms of assembly, homodimer; the homodimers are part of the immature particles. Interacts with human TSG101 and NEDD4; these interactions are essential for budding and release of viral particles. Homodimer; further assembles as homohexamers. Specific enzymatic cleavages by the viral protease yield mature proteins. The polyprotein is cleaved during and after budding, this process is termed maturation. The protease is autoproteolytically processed at its N- and C-termini. In terms of processing, myristoylated. Myristoylation of the matrix (MA) domain mediates the transport and binding of Gag polyproteins to the host plasma membrane and is required for the assembly of viral particles.

The protein localises to the virion. The matrix domain targets Gag, Gag-Pro and Gag-Pro-Pol polyproteins to the plasma membrane via a multipartite membrane binding signal, that includes its myristoylated N-terminus. Functionally, matrix protein. Its function is as follows. Forms the spherical core of the virus that encapsulates the genomic RNA-nucleocapsid complex. In terms of biological role, binds strongly to viral nucleic acids and promote their aggregation. Also destabilizes the nucleic acids duplexes via highly structured zinc-binding motifs. The aspartyl protease mediates proteolytic cleavages of Gag and Gag-Pol polyproteins during or shortly after the release of the virion from the plasma membrane. Cleavages take place as an ordered, step-wise cascade to yield mature proteins. This process is called maturation. Displays maximal activity during the budding process just prior to particle release from the cell. This is Gag-Pro polyprotein from Bovine leukemia virus (isolate Japanese BLV-1) (BLV).